The primary structure comprises 454 residues: Bifunctional protein GlmU (454 aa).

The interval 1–226 (MALNVVILAA…AIEVEGANNR (226 aa)) is pyrophosphorylase. Residues 8 to 11 (LAAG), K22, Q73, 78 to 79 (GT), 100 to 102 (YGD), G137, E151, N166, and N224 contribute to the UDP-N-acetyl-alpha-D-glucosamine site. Position 102 (D102) interacts with Mg(2+). Residue N224 participates in Mg(2+) binding. The segment at 227-247 (VQLAQLERAYQAREAEKLMIA) is linker. Positions 248 to 454 (GANLRDPSRI…GWQRPVKIKE (207 aa)) are N-acetyltransferase. 2 residues coordinate UDP-N-acetyl-alpha-D-glucosamine: R330 and K348. The active-site Proton acceptor is the H360. UDP-N-acetyl-alpha-D-glucosamine is bound by residues Y363 and N374. Residues A377, 383–384 (NY), S402, A420, and R437 each bind acetyl-CoA.

This sequence in the N-terminal section; belongs to the N-acetylglucosamine-1-phosphate uridyltransferase family. In the C-terminal section; belongs to the transferase hexapeptide repeat family. Homotrimer. Mg(2+) is required as a cofactor.

It is found in the cytoplasm. It catalyses the reaction alpha-D-glucosamine 1-phosphate + acetyl-CoA = N-acetyl-alpha-D-glucosamine 1-phosphate + CoA + H(+). It carries out the reaction N-acetyl-alpha-D-glucosamine 1-phosphate + UTP + H(+) = UDP-N-acetyl-alpha-D-glucosamine + diphosphate. It functions in the pathway nucleotide-sugar biosynthesis; UDP-N-acetyl-alpha-D-glucosamine biosynthesis; N-acetyl-alpha-D-glucosamine 1-phosphate from alpha-D-glucosamine 6-phosphate (route II): step 2/2. It participates in nucleotide-sugar biosynthesis; UDP-N-acetyl-alpha-D-glucosamine biosynthesis; UDP-N-acetyl-alpha-D-glucosamine from N-acetyl-alpha-D-glucosamine 1-phosphate: step 1/1. Its pathway is bacterial outer membrane biogenesis; LPS lipid A biosynthesis. Catalyzes the last two sequential reactions in the de novo biosynthetic pathway for UDP-N-acetylglucosamine (UDP-GlcNAc). The C-terminal domain catalyzes the transfer of acetyl group from acetyl coenzyme A to glucosamine-1-phosphate (GlcN-1-P) to produce N-acetylglucosamine-1-phosphate (GlcNAc-1-P), which is converted into UDP-GlcNAc by the transfer of uridine 5-monophosphate (from uridine 5-triphosphate), a reaction catalyzed by the N-terminal domain. This Shewanella sp. (strain MR-7) protein is Bifunctional protein GlmU.